A 674-amino-acid polypeptide reads, in one-letter code: MGMEALRFLHVIFFFVLILHCHCGTSLSGSSDVKLLLGKIKSSLQGNSESLLLSSWNSSVPVCQWRGVKWVFSNGSPLQCSDLSSPQWTNTSLFNDSSLHLLSLQLPSANLTGSLPREIGEFSMLQSVFLNINSLSGSIPLELGYTSSLSDVDLSGNALAGVLPPSIWNLCDKLVSFKIHGNNLSGVLPEPALPNSTCGNLQVLDLGGNKFSGEFPEFITRFKGVKSLDLSSNVFEGLVPEGLGVLELESLNLSHNNFSGMLPDFGESKFGAESFEGNSPSLCGLPLKPCLGSSRLSPGAVAGLVIGLMSGAVVVASLLIGYLQNKKRKSSIESEDDLEEGDEEDEIGEKEGGEGKLVVFQGGENLTLDDVLNATGQVMEKTSYGTVYKAKLSDGGNIALRLLREGTCKDRSSCLPVIRQLGRIRHENLVPLRAFYQGKRGEKLLIYDYLPNISLHDLLHESKPRKPALNWARRHKIALGIARGLAYLHTGQEVPIIHGNIRSKNVLVDDFFFARLTEFGLDKIMVQAVADEIVSQAKSDGYKAPELHKMKKCNPRSDVYAFGILLLEILMGKKPGKSGRNGNEFVDLPSLVKAAVLEETTMEVFDLEAMKGIRSPMEEGLVHALKLAMGCCAPVTTVRPSMEEVVKQLEENRPRNRSALYSPTETRSDAETPF.

An N-terminal signal peptide occupies residues 1-25; it reads MGMEALRFLHVIFFFVLILHCHCGT. Residues 26 to 295 are Extracellular-facing; that stretch reads SLSGSSDVKL…PLKPCLGSSR (270 aa). Asparagine 57, asparagine 90, asparagine 95, and asparagine 110 each carry an N-linked (GlcNAc...) asparagine glycan. LRR repeat units follow at residues 100–122, 124–146, 148–169, and 173–194; these read HLLS…IGEF, MLQS…LGYT, SLSD…SIWN, and KLVS…PALP. Asparagine 183 and asparagine 195 each carry an N-linked (GlcNAc...) asparagine glycan. 3 LRR repeats span residues 200–222, 224–244, and 247–269; these read NLQV…ITRF, GVKS…EGLG, and ELES…GESK. N-linked (GlcNAc...) asparagine glycans are attached at residues asparagine 252 and asparagine 257. The chain crosses the membrane as a helical span at residues 296–323; the sequence is LSPGAVAGLVIGLMSGAVVVASLLIGYL. The Cytoplasmic portion of the chain corresponds to 324–674; that stretch reads QNKKRKSSIE…ETRSDAETPF (351 aa). The segment at 331-350 is disordered; the sequence is SIESEDDLEEGDEEDEIGEK. Over residues 333–348 the composition is skewed to acidic residues; sequence ESEDDLEEGDEEDEIG. Serine 334 carries the phosphoserine modification. Positions 373 to 674 constitute a Protein kinase domain; that stretch reads NATGQVMEKT…ETRSDAETPF (302 aa). Threonine 375 carries the post-translational modification Phosphothreonine. Position 454 is a phosphoserine (serine 454). Residues 649 to 674 are disordered; that stretch reads LEENRPRNRSALYSPTETRSDAETPF.

The protein belongs to the protein kinase superfamily.

It is found in the membrane. Does not seem to have conserved a kinase activity. The sequence is that of Putative kinase-like protein TMKL1 (TMKL1) from Arabidopsis thaliana (Mouse-ear cress).